The chain runs to 712 residues: Polyribonucleotide nucleotidyltransferase (712 aa).

The Mg(2+) site is built by Asp487 and Asp493. A KH domain is found at 554–613 (PKIITMTINPDKIRDVIGPSGKQINKIIEETGVKIDIEQDGTVFISSINQEMNDKAKKII). In terms of domain architecture, S1 motif spans 623–691 (GEIYEGKVKR…KQGRVNLSRK (69 aa)).

Belongs to the polyribonucleotide nucleotidyltransferase family. Mg(2+) serves as cofactor.

It localises to the cytoplasm. It catalyses the reaction RNA(n+1) + phosphate = RNA(n) + a ribonucleoside 5'-diphosphate. Its function is as follows. Involved in mRNA degradation. Catalyzes the phosphorolysis of single-stranded polyribonucleotides processively in the 3'- to 5'-direction. The polypeptide is Polyribonucleotide nucleotidyltransferase (Bacillus cereus (strain 03BB102)).